The chain runs to 133 residues: Small ribosomal subunit protein uS8 (133 aa).

This sequence belongs to the universal ribosomal protein uS8 family. In terms of assembly, part of the 30S ribosomal subunit. Contacts proteins S5 and S12.

Functionally, one of the primary rRNA binding proteins, it binds directly to 16S rRNA central domain where it helps coordinate assembly of the platform of the 30S subunit. This chain is Small ribosomal subunit protein uS8, found in Synechococcus sp. (strain CC9605).